A 525-amino-acid chain; its full sequence is Protein disulfide-isomerase A2 (525 aa).

A signal peptide spans 1 to 21; that stretch reads MSCQLLPVLLLLLLRASCPWG. The region spanning 27–152 is the Thioredoxin 1 domain; the sequence is RSPSEEPPEE…IAEWLRRRVG (126 aa). Active-site nucleophile residues include Cys71 and Cys74. Cys71 and Cys74 form a disulfide bridge. N-linked (GlcNAc...) asparagine glycans are attached at residues Asn127 and Asn284. The 130-residue stretch at 367-496 folds into the Thioredoxin 2 domain; the sequence is VLNGQVKPYL…FSKFLDNGGV (130 aa). Active-site nucleophile residues include Cys418 and Cys421. Cys418 and Cys421 are disulfide-bonded. Residues 498–525 are disordered; it reads PTEEPLEEPAAPFPEPPANSTMGSKEEL. Asn516 carries an N-linked (GlcNAc...) asparagine glycan. Over residues 516 to 525 the composition is skewed to polar residues; sequence NSTMGSKEEL. A Prevents secretion from ER motif is present at residues 522 to 525; that stretch reads KEEL.

The protein belongs to the protein disulfide isomerase family. In terms of assembly, monomer; predominantly as monomer under reducing conditions. Homodimer; disulfide-linked. Part of a large chaperone multiprotein complex comprising DNAJB11, HSP90B1, HSPA5, HYOU, PDIA2, PDIA4, PDIA6, PPIB, SDF2L1, UGGT1 and very small amounts of ERP29, but not, or at very low levels, CALR nor CANX. The disulfide-linked homodimer exhibits an enhanced chaperone activity. In terms of processing, glycosylated.

The protein localises to the endoplasmic reticulum lumen. The enzyme catalyses Catalyzes the rearrangement of -S-S- bonds in proteins.. Acts as an intracellular estrogen-binding protein. May be involved in modulating cellular levels and biological functions of estrogens in the pancreas. May act as a chaperone that inhibits aggregation of misfolded proteins. The protein is Protein disulfide-isomerase A2 (PDIA2) of Pongo abelii (Sumatran orangutan).